Reading from the N-terminus, the 178-residue chain is Prion-like protein doppel (178 aa).

Residues 1 to 25 (MRKHLGGCWLAIVCILLFSQLCSVK) form the signal peptide. Residues 27–50 (RGIKHRIKWNRKVLPSTSQVTEAR) are flexible tail. The globular stretch occupies residues 51 to 154 (TAEIRPGAFI…KHCDFWLERG (104 aa)). Cystine bridges form between cysteine 94-cysteine 147 and cysteine 108-cysteine 142. Asparagine 98 and asparagine 110 each carry an N-linked (GlcNAc...) asparagine glycan. A cu(2+) binding region spans residues 124 to 141 (KQDNKLYQRVLWQLIREL). Glycine 154 is lipidated: GPI-anchor amidated glycine. The propeptide at 155–178 (AGLRVTLDQPMMLCLLVFIWFIVK) is removed in mature form.

It belongs to the prion family. In terms of processing, N-glycosylated. O-glycosylated. In terms of tissue distribution, strongly expressed in testis. Detected at low levels in ovary, spleen, kidney and mammary gland.

Its subcellular location is the cell membrane. Its function is as follows. Required for normal acrosome reaction and for normal male fertility. Can bind Cu(2+). The polypeptide is Prion-like protein doppel (PRND) (Bos taurus (Bovine)).